Consider the following 187-residue polypeptide: CRISPR system Cmr subunit Cmr1-2 (187 aa).

The protein belongs to the CRISPR system Cmr1 family. In terms of assembly, part of the type III-B Cmr ribonucleoprotein (RNP) complex. This is an elongated RNP with Cmr2 and Cmr3 as the base, with Cmr4 and Cmr5 forming a helical core along the mature crRNA (39 or 45 nt in length), while the complex is capped by Cmr6 and Cmr1. The 5' end of the crRNA is bound to Cmr2 and Cmr3, while Cmr6 and a Cmr1 subunit (Cmr1-1 or Cmr1-2) cap the 3' end of the crRNA. The target RNA lies antiparallel to the crRNA, with its 5' end near Cmr1 and Cmr6 and its 3' end near Cmr2 and Cmr3; major target cleavage occurs nears the junction of Cmr1/Cmr6 and Cmr4/Cmr, with minor cleavage occurring at 6 nt intervals which coincide with the proposed spacing of Cmr4 subunits.

It is found in the cytoplasm. Its function is as follows. CRISPR (clustered regularly interspaced short palindromic repeat), is an adaptive immune system that provides protection against mobile genetic elements (viruses, transposable elements and conjugative plasmids). CRISPR clusters contain sequences complementary to antecedent mobile elements and target invading nucleic acids. CRISPR clusters are transcribed and processed into CRISPR RNA (crRNA), formerly called psiRNA (prokaryotic silencing) in this organism. Part of the Cmr ribonucleoprotein complex which has divalent cation-dependent endoribonuclease activity specific for ssRNA complementary to the crRNA (target RNA), generating 5' hydroxy- and 3' phosphate or 2'-3' cyclic phosphate termini. Cmr4 is probably the subunit that cleaves target RNA. Cmr complex does not cleave ssDNA complementary to the crRNA. Cleavage of invading RNA is guided by the crRNA; substrate cleavage occurs a fixed distance (14 nt) from the 3' end of the crRNA. In vitro reconstitution shows Cmr1-2 and Cmr5 are not absolutely necessary for target cleavage. This is CRISPR system Cmr subunit Cmr1-2 from Pyrococcus furiosus (strain ATCC 43587 / DSM 3638 / JCM 8422 / Vc1).